The primary structure comprises 310 residues: Homoserine O-acetyltransferase (310 aa).

Residue C142 is the Acyl-thioester intermediate of the active site. K163 and S192 together coordinate substrate. The Proton acceptor role is filled by H235. Residue E237 is part of the active site. R249 contacts substrate.

It belongs to the MetA family.

It is found in the cytoplasm. The catalysed reaction is L-homoserine + acetyl-CoA = O-acetyl-L-homoserine + CoA. It participates in amino-acid biosynthesis; L-methionine biosynthesis via de novo pathway; O-acetyl-L-homoserine from L-homoserine: step 1/1. Transfers an acetyl group from acetyl-CoA to L-homoserine, forming acetyl-L-homoserine. The chain is Homoserine O-acetyltransferase from Lachnospira eligens (strain ATCC 27750 / DSM 3376 / VPI C15-48 / C15-B4) (Eubacterium eligens).